A 259-amino-acid chain; its full sequence is tRNA pseudouridine synthase A (259 aa).

D52 functions as the Nucleophile in the catalytic mechanism. Y111 is a substrate binding site.

Belongs to the tRNA pseudouridine synthase TruA family. In terms of assembly, homodimer.

It catalyses the reaction uridine(38/39/40) in tRNA = pseudouridine(38/39/40) in tRNA. Formation of pseudouridine at positions 38, 39 and 40 in the anticodon stem and loop of transfer RNAs. The chain is tRNA pseudouridine synthase A from Ruegeria sp. (strain TM1040) (Silicibacter sp.).